The sequence spans 435 residues: Adenylosuccinate synthetase (435 aa).

GTP contacts are provided by residues 13–19 (GDEGKGK) and 41–43 (GHT). The active-site Proton acceptor is Asp14. Mg(2+) is bound by residues Asp14 and Gly41. IMP is bound by residues 14–17 (DEGK), 39–42 (NAGH), Thr130, Arg144, Gln225, Thr240, and Arg304. The Proton donor role is filled by His42. Substrate is bound at residue 300–306 (ATTGRPR). Residues Arg306, 332-334 (KLD), and 419-421 (STG) each bind GTP.

Belongs to the adenylosuccinate synthetase family. Homodimer. Requires Mg(2+) as cofactor.

The protein localises to the cytoplasm. It catalyses the reaction IMP + L-aspartate + GTP = N(6)-(1,2-dicarboxyethyl)-AMP + GDP + phosphate + 2 H(+). The protein operates within purine metabolism; AMP biosynthesis via de novo pathway; AMP from IMP: step 1/2. Its function is as follows. Plays an important role in the de novo pathway of purine nucleotide biosynthesis. Catalyzes the first committed step in the biosynthesis of AMP from IMP. The chain is Adenylosuccinate synthetase from Nitrosospira multiformis (strain ATCC 25196 / NCIMB 11849 / C 71).